Consider the following 138-residue polypeptide: Small ribosomal subunit protein uS11c (138 aa).

This sequence belongs to the universal ribosomal protein uS11 family. As to quaternary structure, part of the 30S ribosomal subunit.

It localises to the plastid. The protein resides in the chloroplast. This Phalaenopsis aphrodite subsp. formosana (Moth orchid) protein is Small ribosomal subunit protein uS11c.